The following is a 258-amino-acid chain: Probable glycerol uptake facilitator protein (258 aa).

The next 2 helical transmembrane spans lie at 11-31 (WWFLAELIGTFILIIFGNGAV) and 50-70 (TVALTWGIGVLFGVLTANAIF). The NPA 1 motif lies at 77 to 79 (NPA). Helical transmembrane passes span 95–115 (ALIWPGFVIGILAQFLGAMIA), 152–172 (FLTEFIATLILIGGVVAASHF), and 180–200 (VPPGFMGLWLVAGIIIAFGGA). The NPA 2 motif lies at 206 to 208 (NPA). A helical membrane pass occupies residues 233–253 (WIPVIAPLSAGLVLSIIIGFS).

It belongs to the MIP/aquaporin (TC 1.A.8) family.

Its subcellular location is the cell membrane. The enzyme catalyses glycerol(in) = glycerol(out). In terms of biological role, mediates glycerol diffusion across the cytoplasmic membrane via a pore-type mechanism. This chain is Probable glycerol uptake facilitator protein (glpF), found in Mycoplasma genitalium (strain ATCC 33530 / DSM 19775 / NCTC 10195 / G37) (Mycoplasmoides genitalium).